A 285-amino-acid polypeptide reads, in one-letter code: Protease HtpX homolog (285 aa).

Helical transmembrane passes span 7-27 (TAMLMAGITALFIVIGGMIGG) and 30-50 (GMTIALLFALAMNFFSYWFSD). Histidine 131 contacts Zn(2+). Glutamate 132 is an active-site residue. Histidine 135 contacts Zn(2+). The next 2 membrane-spanning stretches (helical) occupy residues 146–166 (ITATMAGAISALANFAMFFGG) and 177–197 (IAGIAVALLAPIAGALIQMAI). Glutamate 202 lines the Zn(2+) pocket.

Belongs to the peptidase M48B family. It depends on Zn(2+) as a cofactor.

The protein localises to the cell inner membrane. This chain is Protease HtpX homolog, found in Burkholderia ambifaria (strain MC40-6).